The following is a 765-amino-acid chain: Putative ankyrin repeat protein L371 (765 aa).

ANK repeat units follow at residues N60 to V89, E93 to G122, K132 to Y161, D165 to A194, Q198 to I227, L232 to H261, E265 to S295, D322 to Y353, and T357 to V395.

This chain is Putative ankyrin repeat protein L371, found in Acanthamoeba polyphaga mimivirus (APMV).